Here is a 157-residue protein sequence, read N- to C-terminus: Deoxyuridine 5'-triphosphate nucleotidohydrolase (157 aa).

DUMP-binding residues include Ser-63, Gly-76, Asp-79, Tyr-82, Lys-87, Arg-132, Phe-137, and Gly-138. A disordered region spans residues 125-157 (NDLESTERGAGGFGSTGINDEKKRKLDEAEAKE). A compositionally biased stretch (basic and acidic residues) spans 143 to 157 (NDEKKRKLDEAEAKE).

It belongs to the dUTPase family. Homotrimer. Mg(2+) is required as a cofactor.

It carries out the reaction dUTP + H2O = dUMP + diphosphate + H(+). It participates in pyrimidine metabolism; dUMP biosynthesis; dUMP from dCTP (dUTP route): step 2/2. Functionally, involved in nucleotide metabolism via production of dUMP, the immediate precursor of thymidine nucleotides, and decreases the intracellular concentration of dUTP so that uracil cannot be incorporated into DNA. The polypeptide is Deoxyuridine 5'-triphosphate nucleotidohydrolase (DUT1) (Yarrowia lipolytica (strain CLIB 122 / E 150) (Yeast)).